The sequence spans 602 residues: Multiple epidermal growth factor-like domains protein 9 (602 aa).

Residues 1–30 (MNGGAERAMRSLPSLGGLALLCCAAAAAAA) form the signal peptide. Over 31 to 514 (AVASAASAGN…LADVSWTQFN (484 aa)) the chain is Extracellular. The segment at 38 to 199 (AGNVTGGGGA…PATEAPSSPP (162 aa)) is disordered. An N-linked (GlcNAc...) asparagine glycan is attached at N40. 2 stretches are compositionally biased toward low complexity: residues 68–85 (PRAT…PPRA) and 139–166 (APTR…TVPA). The span at 167 to 176 (PTTPRTPTPD) shows a compositional bias: pro residues. N182 carries N-linked (GlcNAc...) asparagine glycosylation. Residues 187-199 (PTPPATEAPSSPP) show a composition bias toward pro residues. Cystine bridges form between C204–C217, C206–C224, C226–C235, C238–C251, C254–C266, C256–C272, C274–C283, C286–C298, C301–C310, C303–C317, C320–C329, C332–C346, C349–C360, C351–C371, C374–C383, C386–C397, C400–C415, C402–C422, C425–C434, and C437–C449. Laminin EGF-like domains follow at residues 204–253 (CNCS…LCQP), 254–300 (CDCS…GCLP), 301–348 (CQCN…ECLR), 349–399 (CPCS…ICRK), and 400–451 (CQCH…NCIK). N-linked (GlcNAc...) asparagine glycans are attached at residues N205 and N218. N245 carries an N-linked (GlcNAc...) asparagine glycan. A glycan (N-linked (GlcNAc...) asparagine) is linked at N267. N305 carries an N-linked (GlcNAc...) asparagine glycan. N-linked (GlcNAc...) asparagine glycosylation is present at N428. N-linked (GlcNAc...) asparagine glycans are attached at residues N468, N481, and N500. A helical transmembrane segment spans residues 515–535 (IIILTVIIIVVVLLMGFVGAV). The Cytoplasmic segment spans residues 536–602 (YMYREYQNRK…LTTPIHNYKA (67 aa)).

The protein localises to the membrane. In Homo sapiens (Human), this protein is Multiple epidermal growth factor-like domains protein 9 (MEGF9).